The primary structure comprises 317 residues: Acetyl-coenzyme A carboxylase carboxyl transferase subunit alpha (317 aa).

The region spanning Arg40–Glu294 is the CoA carboxyltransferase C-terminal domain.

This sequence belongs to the AccA family. In terms of assembly, acetyl-CoA carboxylase is a heterohexamer composed of biotin carboxyl carrier protein (AccB), biotin carboxylase (AccC) and two subunits each of ACCase subunit alpha (AccA) and ACCase subunit beta (AccD).

The protein resides in the cytoplasm. The catalysed reaction is N(6)-carboxybiotinyl-L-lysyl-[protein] + acetyl-CoA = N(6)-biotinyl-L-lysyl-[protein] + malonyl-CoA. It participates in lipid metabolism; malonyl-CoA biosynthesis; malonyl-CoA from acetyl-CoA: step 1/1. In terms of biological role, component of the acetyl coenzyme A carboxylase (ACC) complex. First, biotin carboxylase catalyzes the carboxylation of biotin on its carrier protein (BCCP) and then the CO(2) group is transferred by the carboxyltransferase to acetyl-CoA to form malonyl-CoA. The polypeptide is Acetyl-coenzyme A carboxylase carboxyl transferase subunit alpha (Haemophilus ducreyi (strain 35000HP / ATCC 700724)).